We begin with the raw amino-acid sequence, 337 residues long: DNA-directed RNA polymerase subunit alpha (337 aa).

Residues methionine 1–glutamate 233 are alpha N-terminal domain (alpha-NTD). Positions phenylalanine 249–tyrosine 337 are alpha C-terminal domain (alpha-CTD).

Belongs to the RNA polymerase alpha chain family. In terms of assembly, homodimer. The RNAP catalytic core consists of 2 alpha, 1 beta, 1 beta' and 1 omega subunit. When a sigma factor is associated with the core the holoenzyme is formed, which can initiate transcription.

The enzyme catalyses RNA(n) + a ribonucleoside 5'-triphosphate = RNA(n+1) + diphosphate. In terms of biological role, DNA-dependent RNA polymerase catalyzes the transcription of DNA into RNA using the four ribonucleoside triphosphates as substrates. The protein is DNA-directed RNA polymerase subunit alpha of Brucella ovis (strain ATCC 25840 / 63/290 / NCTC 10512).